A 102-amino-acid polypeptide reads, in one-letter code: Circadian clock protein KaiB3 (102 aa).

This sequence belongs to the KaiB family. As to quaternary structure, purifies as a monomer and homotetramer. Interacts with KaiC1 and KaiC3.

In terms of biological role, a paralog of KaiB1, the major clock oscillator protein in this species. KaiB3 and KaiC3 may cross talk with the core oscillator. The monomer reduces the ATPase activity of KaiC3 by 55%, the homotetramer has no effect. Its function is as follows. A metamorphic protein which may reversibly switch between an inactive tetrameric fold and a rare thioredoxin-like monomeric fold (KaiB(fs)). This chain is Circadian clock protein KaiB3, found in Synechocystis sp. (strain ATCC 27184 / PCC 6803 / Kazusa).